Reading from the N-terminus, the 309-residue chain is Verprolin (309 aa).

Residues 1-13 (MAPAPPPPPPAPA) show a composition bias toward pro residues. Residues 1–273 (MAPAPPPPPP…PNRVDDHGRF (273 aa)) form a disordered region. Residues 27–44 (DRSALLNSIQKGKKLKKA) enclose the WH2 domain. A compositionally biased stretch (polar residues) spans 82-91 (LPTSSNNTQQ). Residues 141 to 207 (TSAPPRPSIP…PPKVPPPPLS (67 aa)) show a composition bias toward pro residues.

The protein belongs to the verprolin family. As to quaternary structure, interacts with wsp1. Interacts with myo1 (via SH3 domain). Interacts with actin monomers.

Its subcellular location is the cytoplasm. It localises to the cytoskeleton. Functionally, involved in cytoskeletal organization and cellular growth. May exert its effects on the cytoskeleton directly, or indirectly via proline-binding proteins such as profilin or proteins possessing SH3 domains. Plays a role in actin patch assembly by enhancing the ability of myo1 to stimulate actin polymerization by the Arp2/3 complex. The sequence is that of Verprolin from Schizosaccharomyces pombe (strain 972 / ATCC 24843) (Fission yeast).